A 297-amino-acid polypeptide reads, in one-letter code: N-acetylmuramic acid 6-phosphate etherase (297 aa).

The SIS domain occupies 55–218 (AAAALKSGGR…STGAMVKFGK (164 aa)). The Proton donor role is filled by Glu83. Glu114 is an active-site residue.

Belongs to the GCKR-like family. MurNAc-6-P etherase subfamily. As to quaternary structure, homodimer.

It carries out the reaction N-acetyl-D-muramate 6-phosphate + H2O = N-acetyl-D-glucosamine 6-phosphate + (R)-lactate. Its pathway is amino-sugar metabolism; 1,6-anhydro-N-acetylmuramate degradation. It participates in amino-sugar metabolism; N-acetylmuramate degradation. The protein operates within cell wall biogenesis; peptidoglycan recycling. Functionally, specifically catalyzes the cleavage of the D-lactyl ether substituent of MurNAc 6-phosphate, producing GlcNAc 6-phosphate and D-lactate. Together with AnmK, is also required for the utilization of anhydro-N-acetylmuramic acid (anhMurNAc) either imported from the medium or derived from its own cell wall murein, and thus plays a role in cell wall recycling. The chain is N-acetylmuramic acid 6-phosphate etherase from Salmonella paratyphi A (strain ATCC 9150 / SARB42).